A 212-amino-acid chain; its full sequence is Ion-translocating oxidoreductase complex subunit G (212 aa).

A helical transmembrane segment spans residues 9–29 (ASLLGLFALLCTALVALVNQF). An FMN phosphoryl threonine modification is found at Thr176.

It belongs to the RnfG family. The complex is composed of six subunits: RnfA, RnfB, RnfC, RnfD, RnfE and RnfG. FMN is required as a cofactor.

Its subcellular location is the cell inner membrane. Part of a membrane-bound complex that couples electron transfer with translocation of ions across the membrane. The chain is Ion-translocating oxidoreductase complex subunit G from Shewanella loihica (strain ATCC BAA-1088 / PV-4).